We begin with the raw amino-acid sequence, 163 residues long: MAMVSGRRSTLNPDAPLFIPAAVRQVEDFSPEWWQLVTTSTWYPDYWISQQQQGADGFYDNGENENGGGHIDVADLLPESFDFDDMEDFFDTDAAEFDQGFDGRMYYQAPSEFGFGKNGEMVKKSSGNRSPRSIVEPAKYAEKPAKWGNQRVAAAPRNIHQPR.

Residues 10–20 (TLNPDAPLFIP) carry the PAM2-like motif. The segment at 118 to 163 (NGEMVKKSSGNRSPRSIVEPAKYAEKPAKWGNQRVAAAPRNIHQPR) is disordered.

In terms of assembly, interacts with PAB2, PAB4 and PAB8. Interacts with MPC. In terms of tissue distribution, expressed in cauline leaves, stems, rosette leaves, immature siliques and primary inflorescences.

It localises to the cytoplasm. In terms of biological role, central component of stress responses that interacts with poly(A)-binding proteins. Negative regulator of abscisic acid (ABA) responses, including resistance to drought and freezing as well as stomatal closure regulation. Mediates resistance to the bacterial necrotroph pathogen Erwinia carotovora subsp. carotovora and promotes the induction of marker genes for systemic acquired resistance (SAR). In Arabidopsis thaliana (Mouse-ear cress), this protein is Protein EARLY RESPONSIVE TO DEHYDRATION 15 (ERD15).